The primary structure comprises 248 residues: ATP synthase subunit a (248 aa).

A run of 5 helical transmembrane segments spans residues 31–51 (GQVL…VLLG), 90–110 (VPYV…GNLF), 129–149 (INTT…AGIS), 195–215 (VIAV…MILF), and 216–236 (LFTG…YIGE).

The protein belongs to the ATPase A chain family. In terms of assembly, F-type ATPases have 2 components, CF(1) - the catalytic core - and CF(0) - the membrane proton channel. CF(1) has five subunits: alpha(3), beta(3), gamma(1), delta(1), epsilon(1). CF(0) has four main subunits: a, b, b' and c.

It is found in the cellular thylakoid membrane. Key component of the proton channel; it plays a direct role in the translocation of protons across the membrane. The protein is ATP synthase subunit a of Synechococcus sp. (strain JA-3-3Ab) (Cyanobacteria bacterium Yellowstone A-Prime).